The sequence spans 152 residues: Regulator of G-protein signaling 21 (152 aa).

Residues 21–137 (NMDTLLANQA…LKSEIYKKLV (117 aa)) form the RGS domain.

In terms of tissue distribution, expressed ubiquitously.

In terms of biological role, inhibits signal transduction by increasing the GTPase activity of G protein alpha subunits thereby driving them into their inactive GDP-bound form. The sequence is that of Regulator of G-protein signaling 21 (RGS21) from Homo sapiens (Human).